We begin with the raw amino-acid sequence, 202 residues long: Nucleoside triphosphate pyrophosphatase (202 aa).

Asp79 functions as the Proton acceptor in the catalytic mechanism.

Belongs to the Maf family. A divalent metal cation serves as cofactor.

It localises to the cytoplasm. It carries out the reaction a ribonucleoside 5'-triphosphate + H2O = a ribonucleoside 5'-phosphate + diphosphate + H(+). It catalyses the reaction a 2'-deoxyribonucleoside 5'-triphosphate + H2O = a 2'-deoxyribonucleoside 5'-phosphate + diphosphate + H(+). In terms of biological role, nucleoside triphosphate pyrophosphatase. May have a dual role in cell division arrest and in preventing the incorporation of modified nucleotides into cellular nucleic acids. This chain is Nucleoside triphosphate pyrophosphatase, found in Rhodopseudomonas palustris (strain BisB5).